The sequence spans 403 residues: Na(+)/H(+) antiporter NhaA (403 aa).

11 helical membrane passes run 23–43 (AFFL…PWAA), 66–86 (VAAW…ILEI), 101–121 (VALP…TYLL), 132–152 (GWAI…LALG), 161–181 (AWLM…IALF), 184–204 (GSMY…LIGA), 219–239 (GILL…AGVI), 257–277 (WVSS…FGFM), 297–317 (LGIM…ATLL), 333–353 (GMLF…LFVA), and 363–383 (IAPA…TGWF).

The protein belongs to the NhaA Na(+)/H(+) (TC 2.A.33) antiporter family.

Its subcellular location is the cell inner membrane. It carries out the reaction Na(+)(in) + 2 H(+)(out) = Na(+)(out) + 2 H(+)(in). Na(+)/H(+) antiporter that extrudes sodium in exchange for external protons. This Gluconobacter oxydans (strain 621H) (Gluconobacter suboxydans) protein is Na(+)/H(+) antiporter NhaA.